The primary structure comprises 724 residues: Probable protein phosphatase 2C 62 (724 aa).

A disordered region spans residues 357–385 (DELISTSEATRHSVDEIAQKPIIDTSEKN). Basic and acidic residues predominate over residues 365-374 (ATRHSVDEIA). The PPM-type phosphatase domain occupies 482 to 719 (DSGFASLQSP…DAVTVIISFV (238 aa)). Mn(2+)-binding residues include Asp-514, Gly-515, Asp-643, and Asp-710.

Belongs to the PP2C family. Mg(2+) is required as a cofactor. The cofactor is Mn(2+).

The enzyme catalyses O-phospho-L-seryl-[protein] + H2O = L-seryl-[protein] + phosphate. It carries out the reaction O-phospho-L-threonyl-[protein] + H2O = L-threonyl-[protein] + phosphate. This Arabidopsis thaliana (Mouse-ear cress) protein is Probable protein phosphatase 2C 62.